The chain runs to 59 residues: Large ribosomal subunit protein bL32 (59 aa).

The protein belongs to the bacterial ribosomal protein bL32 family.

The chain is Large ribosomal subunit protein bL32 from Mycoplasma capricolum subsp. capricolum (strain California kid / ATCC 27343 / NCTC 10154).